A 491-amino-acid chain; its full sequence is MKIAIAGGGIGGLISALMLRKKGYEVSLFEKRDRLGGRLAFTEEQGYRIDEGPTIVLLPEMLTSILNEAGISRDQYELININPLYKLHFKDGSSYTKYNSIERQIQEIKENFPGNEEGFVQFMKDMEIRFNLGKDQFLEKSFHDKRTFWTRNNLKTLVHLKAYKSVNNSLKAYFQDERIRQAYSLQTLYIGGNPLDSPALYSLISFSEHKHGIYYLKGGYASLVTVLENALLNSGVKVMKNATVERVVTEGEQAAALIVNGEEVKADAFVLNGDFPGASKMIPKESMPARNYTASSSCVLLYFGLDKVYRDSPVHQFFMGSNFQQHMKEIFETKEVPSDPSIYAFHPSVIDSSLAPEGHGVLYALVPVPSGSPINWGEQEGFVEKVIDQLEERGFPGLRKSIQWKKVRTPDDKEMEGLFQGGSFGIAPTLFQSGVFRPQVKPSKLTNVYAAGASIHPGGGIPIVMQGAKLMVSAILSDHQNKEREGVSLSG.

E208 is a catalytic residue.

This sequence belongs to the carotenoid/retinoid oxidoreductase family. CrtN subfamily.

The enzyme catalyses all-trans-4,4'-diapolycopen-4-al + A + H2O = all-trans-4,4'-diapolycopen-4-oate + AH2 + H(+). The protein operates within carotenoid biosynthesis. In terms of biological role, involved in the biosynthesis of the major C30 carotenoid methyl 4'-[6-O-(acylglycosyl)oxy]-4,4'-diapolycopen-4-oic acid via 4,4'-diapolycopen-4-oic acid intermediate. Catalyzes the oxidation of 4,4'-diapolycopen-4-al to yield 4,4'-diapolycopen-4-oic acid. The protein is 4,4'-diapolycopen-4-al dehydrogenase of Metabacillus indicus (Bacillus indicus).